Consider the following 270-residue polypeptide: MSEVELKPVHRIALGIEYDGSKYYGWQRQNEVRSVQEKLEKALSQVANQPIAVCCAGRTDAGVHGTGQVVHFETTSVRKDAAWTLGVNANLPGDIAVRWVKDVPDDFHARFSATARRYRYIIYNQRLRPAVLGQGVTHFYEPLDAERMQRAAQSLIGENDFTSFRAVQCQSRTPWRNVMHINVSRYGAYVVVDIKANAFVHHMVRNIVGSLMEVGAGHQPESWIAELLAAKDRTLAAATAKAEGLYLVSVDYPERFDLPKPPMGPLFLAD.

The Nucleophile role is filled by aspartate 60. The RNA binding stretch occupies residues 107–111 (FHARF). Tyrosine 118 contacts substrate. The segment at 168-172 (QCQSR) is interaction with tRNA.

This sequence belongs to the tRNA pseudouridine synthase TruA family. In terms of assembly, homodimer.

The catalysed reaction is uridine(38/39/40) in tRNA = pseudouridine(38/39/40) in tRNA. Its function is as follows. Formation of pseudouridine at positions 38, 39 and 40 in the anticodon stem and loop of transfer RNAs. This is tRNA pseudouridine synthase A from Enterobacter sp. (strain 638).